The primary structure comprises 168 residues: Ribosome maturation factor RimM (168 aa).

In terms of domain architecture, PRC barrel spans 93–168 (EDEFYQSDLV…IVLNIPEFID (76 aa)).

This sequence belongs to the RimM family. Binds ribosomal protein uS19.

It localises to the cytoplasm. Its function is as follows. An accessory protein needed during the final step in the assembly of 30S ribosomal subunit, possibly for assembly of the head region. Essential for efficient processing of 16S rRNA. May be needed both before and after RbfA during the maturation of 16S rRNA. It has affinity for free ribosomal 30S subunits but not for 70S ribosomes. The chain is Ribosome maturation factor RimM from Wolbachia pipientis wMel.